Consider the following 1185-residue polypeptide: 205 kDa microtubule-associated protein (1185 aa).

Over residues 146 to 159 the composition is skewed to low complexity; sequence EPNQLPEQLQQQQQ. A disordered region spans residues 146 to 196; sequence EPNQLPEQLQQQQQIESQGVHEDPRQEDEDEHSSVATTYGTSSLSENNSSP. Positions 179 to 196 are enriched in polar residues; that stretch reads SVATTYGTSSLSENNSSP. Phosphoserine is present on residues Ser354 and Ser448. The residue at position 450 (Tyr450) is a Phosphotyrosine. Ser709, Ser710, and Ser712 each carry phosphoserine. A Phosphothreonine modification is found at Thr721. Phosphoserine is present on Ser728. A microtubule-binding region spans residues 745–977; the sequence is TAADGQSISQ…ASTKVRPAAT (233 aa). Low complexity predominate over residues 856 to 866; sequence SIATKTSTTSS. Disordered stretches follow at residues 856-1035 and 1054-1114; these read SIAT…TSTA and SASL…SSPA. Composition is skewed to polar residues over residues 867-881 and 908-936; these read LTGNPRKSLSSNVGS and TITNKPTASGTASDNVTRTTLRPLVSTNA. At Ser874 the chain carries Phosphoserine. A compositionally biased stretch (low complexity) spans 940–952; sequence ATSGTGSVASSTA. The span at 989 to 999 shows a compositional bias: polar residues; that stretch reads PRSTISSTTTV. Residues 1003 to 1015 show a composition bias toward low complexity; sequence PSTSTPSFSTRSP. 2 stretches are compositionally biased toward polar residues: residues 1016–1026 and 1054–1066; these read NKQQSNGLGKN and SASLTYNNGSTSR. 2 positions are modified to phosphoserine: Ser1075 and Ser1086. A compositionally biased stretch (polar residues) spans 1100-1111; sequence LTPQSKDGTAKS. A Phosphoserine modification is found at Ser1121.

It is found in the cytoplasm. The protein localises to the cytoskeleton. Its subcellular location is the spindle. May play an important role in the regulation of microtubule assembly and interaction. This Drosophila melanogaster (Fruit fly) protein is 205 kDa microtubule-associated protein (Map205).